The chain runs to 51 residues: Large ribosomal subunit protein bL33 (51 aa).

This sequence belongs to the bacterial ribosomal protein bL33 family.

This chain is Large ribosomal subunit protein bL33, found in Alkalilimnicola ehrlichii (strain ATCC BAA-1101 / DSM 17681 / MLHE-1).